Consider the following 603-residue polypeptide: Probable methyltransferase PMT20 (603 aa).

The Cytoplasmic portion of the chain corresponds to 1–16 (MKSGKQSSQPEKGTSR). A helical; Signal-anchor for type II membrane protein transmembrane segment spans residues 17 to 37 (ILSLTVLFIAFCGFSFYLGGI). Over 38 to 603 (FCSERDKIVA…KLWFSSNQTS (566 aa)) the chain is Lumenal. Asn-313 and Asn-600 each carry an N-linked (GlcNAc...) asparagine glycan.

Belongs to the methyltransferase superfamily.

The protein resides in the golgi apparatus membrane. This Arabidopsis thaliana (Mouse-ear cress) protein is Probable methyltransferase PMT20.